The primary structure comprises 226 residues: RPA-interacting protein A (226 aa).

The tract at residues 1 to 45 (MEAERRHRALYKGTTPPWKETYRKRCVERLKRNRSKLLDKFRQVG) is interaction with importin beta. The tract at residues 49 to 171 (HGGVGGSFLV…QCGVYINTQS (123 aa)) is interaction with RPA1. An RIP-type zinc finger spans residues 144–219 (CPVCNRNYLT…ASLFMSCQEC (76 aa)).

In terms of assembly, interacts directly with the rpa1 subunit of RPA complex. Interacts with importin beta, but not with importin alpha. Forms a complex with the RPA complex and importin beta, which is dissociated by Ran-GTP.

It localises to the nucleus. Its function is as follows. Mediates the import of RPA complex into the nucleus, via its interaction with importin beta. The polypeptide is RPA-interacting protein A (rpain-a) (Xenopus laevis (African clawed frog)).